The following is a 453-amino-acid chain: Glutamate-rich protein 5 (453 aa).

3 disordered regions span residues 1 to 38 (MGCS…ALGR), 66 to 377 (NGVQ…EHPA), and 394 to 453 (TNEE…HSML). Residues 11–21 (AGDDNRLRSAT) are compositionally biased toward basic and acidic residues. A Phosphoserine modification is found at S155. 2 stretches are compositionally biased toward polar residues: residues 230-243 (LQET…SQPL) and 271-283 (QETL…SQLR). 3 stretches are compositionally biased toward basic and acidic residues: residues 305-332 (EEEK…EHGG), 364-374 (IQPERTVESME), and 394-403 (TNEEDQHIEG). Positions 404–413 (ETGETVETEM) are enriched in acidic residues. Over residues 414–424 (ESEKVSEGAET) the composition is skewed to basic and acidic residues.

The sequence is that of Glutamate-rich protein 5 (ERICH5) from Bos taurus (Bovine).